Consider the following 180-residue polypeptide: DNA replication regulator protein HobA (180 aa).

Residues E17, E27, E140, E143, and N176 each contribute to the Ca(2+) site.

As to quaternary structure, forms dimers and homotetramers. Interacts with domains I and II (residues 1-112) of DnaA. In a crystal with domains I and II of DnaA HobA forms tetramers with DnaA fragments bound at the dimer interface of the tetramer. The cofactor is Ca(2+).

Required for DNA replication initiation. Increases binding of DnaA to oriC region. The sequence is that of DNA replication regulator protein HobA from Helicobacter pylori (strain ATCC 700392 / 26695) (Campylobacter pylori).